Here is a 74-residue protein sequence, read N- to C-terminus: Alpha-conotoxin GeXIVA (74 aa).

Positions M1–A22 are cleaved as a signal peptide. Positions V23–K46 are excised as a propeptide. An interacts with alpha-9-alpha-10 (CHRNA9-CHRNA10) nAChR region spans residues R56–R64.

The protein belongs to the conotoxin O1 superfamily. The native disulfide bond pairing has not been studied. Three isomers may exist: the bead isomer (I-II; III-IV), the globular isomer (I-III; II-IV), the ribbon isomer (I-IV; II-III). They have all been synthesized and their activity tested. All of them show similar potency on alpha-9-alpha-10 (CHRNA9-CHRNA10) nAChR, showing that disulfide bonds does not significantly affect their activity. In addition, removal of disulfide bonds does not affect the activity on alpha-9-alpha-10 (CHRNA9-CHRNA10) nAChR either. Expressed by the venom duct.

It is found in the secreted. In terms of biological role, alpha-conotoxins act on postsynaptic membranes, they bind to the nicotinic acetylcholine receptors (nAChR) and thus inhibit them. This toxin is very potent on alpha-9-alpha-10/CHRNA9-CHRNA10 nAChR (IC(50)=4.61-12 nM for the bead isomer (I-II; III-IV), IC(50)=7-16 nM for the ribbon isomer (I-IV; II-III) and IC(50)=22.7 nM for the globular isomer (I-III; II-IV)). The bead isomer also shows a weak inhibition on other nAChRs (alpha-1-beta-1-delta-epsilon/CHRNA1-CHRNB1-CHRND-CHRNE, alpha-7/CHRNA7, alpha-6/alpha-3-beta-2-beta-3 (CHRNA6/CHRNA3-CHRNB2-CHRNB3), alpha-3-beta-2/CHRNA3-CHRNB2, alpha-2-beta-2/CHRNA2-CHRNB2, alpha-6/alpha-3-beta-4 (CHRNA6/CHRNA3-CHRNB4), alpha-4-beta-2/CHRNA4-CHRNB2, alpha-4-beta-4/CHRNA4-CHRNB4, alpha-2-beta-4/CHRNA2-CHRNB4, alpha-3-beta-4/CHRNA3-CHRNB4). The toxin blockade is voltage-dependent, and its binding site does not overlap with the binding site of the competitive antagonist alpha-conotoxin RgIA. The toxin inhibits Sf9 cell growth. Both the bead and ribbon isomers relieve pain effects in the rat chronic constriction injury (CCI) model of neuropathic pain, and in the acute pain model of tail flick test, but have no effect on motor performance. The sequence is that of Alpha-conotoxin GeXIVA from Conus generalis (General cone).